Consider the following 299-residue polypeptide: Protein PRY1 (299 aa).

The first 19 residues, 1 to 19 (MKLSKLSILTSALATSALA), serve as a signal peptide directing secretion. Residues 103-157 (TDSTTTLTSSESTSQSLAQATTTSTPAAASTTSTPAATTTTSQAAATSSASSSDS) form a disordered region. An SCP domain is found at 167 to 281 (LAEHNKKRAL…AWGDYVICSY (115 aa)).

Belongs to the CRISP family. Post-translationally, O-glycosylated.

The protein resides in the secreted. Functionally, secreted protein required for efficient export of lipids such as acetylated sterols. Acts in detoxification of hydrophobic compounds. In Saccharomyces cerevisiae (strain ATCC 204508 / S288c) (Baker's yeast), this protein is Protein PRY1.